Reading from the N-terminus, the 272-residue chain is Ethanolamine ammonia-lyase small subunit (272 aa).

V161, E182, and C211 together coordinate adenosylcob(III)alamin.

This sequence belongs to the EutC family. As to quaternary structure, the basic unit is a heterodimer which dimerizes to form tetramers. The heterotetramers trimerize; 6 large subunits form a core ring with 6 small subunits projecting outwards. Requires adenosylcob(III)alamin as cofactor.

Its subcellular location is the bacterial microcompartment. The catalysed reaction is ethanolamine = acetaldehyde + NH4(+). It participates in amine and polyamine degradation; ethanolamine degradation. Functionally, catalyzes the deamination of various vicinal amino-alcohols to oxo compounds. Allows this organism to utilize ethanolamine as the sole source of nitrogen and carbon in the presence of external vitamin B12. This Xanthomonas campestris pv. campestris (strain B100) protein is Ethanolamine ammonia-lyase small subunit.